Here is a 24-residue protein sequence, read N- to C-terminus: SM-11044-binding protein (24 aa).

In terms of biological role, may mediate relaxation of depolarized colon tonus. It binds iodocyanopindolol and SM-11044. In Rattus norvegicus (Rat), this protein is SM-11044-binding protein.